Here is a 409-residue protein sequence, read N- to C-terminus: MAESSTVERYRFRKMIERLENLRGQGTELITIYIPPENRLSDVIAQMREEYSQASNIKSKRTRKNVQSAIEVVMQRLKMVGETPENGLVVLVGTVQDGTKEKMVAELIEPPEPVDRFIYRCDSKFYLEPLKEYLEEKDVYGILVMDRREATIGLVKGKRIEPVKRLTSDVPGKHKAGGQSQRRFDRLIEHAAHEFYQKVGEAAREAFEDVKDLKGIIVGGPGPTKEEFLDGDYLPKDLKEKVLTVVDVGNTDESGLREALNKAEEALKEAELVREKRLVRKFMEEAVNGELAAYGEEVDELLKMGAVEVLLVSEDLEGYKVILRCPECGYENIVTVKEKDEAKKYVEECPECGEAELNVEEIKDIVDYYVELAEQMGSNVEIISTETEEGAQFYNAFRGLGALLRFRPK.

Belongs to the eukaryotic release factor 1 family. In terms of assembly, heterodimer of two subunits, one of which binds GTP.

The protein resides in the cytoplasm. Its function is as follows. Directs the termination of nascent peptide synthesis (translation) in response to the termination codons UAA, UAG and UGA. The polypeptide is Peptide chain release factor subunit 1 (Methanopyrus kandleri (strain AV19 / DSM 6324 / JCM 9639 / NBRC 100938)).